The chain runs to 455 residues: Putative O-acetyltransferase SAT14 (455 aa).

It belongs to the lysine N-acyltransferase MbtK family.

Its pathway is mycotoxin biosynthesis. Functionally, putative O-acetyltransferase; part of the satratoxin SC2 cluster involved in the biosynthesis of satratoxins, trichothecene mycotoxins that are associated with human food poisonings. Satratoxins are suggested to be made by products of multiple gene clusters (SC1, SC2 and SC3) that encode 21 proteins in all, including polyketide synthases, acetyltransferases, and other enzymes expected to modify the trichothecene skeleton. SC1 encodes 10 proteins, SAT1 to SAT10. The largest are SAT8, which encodes a putative polyketide synthase (PKS) with a conventional non-reducing architecture, and SAT10, a putative protein containing four ankyrin repeats and thus may be involved in protein scaffolding. The putative short-chain reductase SAT3 may assist the PKS in some capacity. SAT6 contains a secretory lipase domain and acts probably as a trichothecene esterase. SAT5 encodes a putative acetyltransferase, and so, with SAT6, may affect endogenous protection from toxicity. The probable transcription factor SAT9 may regulate the expression of the SC1 cluster. SC2 encodes proteins SAT11 to SAT16, the largest of which encodes the putative reducing PKS SAT13. SAT11 is a cytochrome P450 monooxygenase, while SAT14 and SAT16 are probable acetyltransferases. The SC2 cluster may be regulated by the transcription factor SAT15. SC3 is a small cluster that encodes 5 proteins, SAT17 to SAT21. SAT21 is a putative MFS-type transporter which may have a role in exporting secondary metabolites. The four other proteins putatively encoded in SC3 include the taurine hydroxylase-like protein SAT17, the O-methyltransferase SAT18, the acetyltransferase SAT19, and the Cys6-type zinc finger SAT20, the latter being probably involved in regulation of SC3 expression. This is Putative O-acetyltransferase SAT14 from Stachybotrys chartarum (strain CBS 109288 / IBT 7711) (Toxic black mold).